Here is a 227-residue protein sequence, read N- to C-terminus: Ribose-5-phosphate isomerase A (227 aa).

Residues 26-29, 82-85, and 95-98 each bind substrate; these read TGST, DGAD, and KGGG. Catalysis depends on Glu104, which acts as the Proton acceptor. Lys122 is a substrate binding site.

The protein belongs to the ribose 5-phosphate isomerase family. In terms of assembly, homodimer.

It carries out the reaction aldehydo-D-ribose 5-phosphate = D-ribulose 5-phosphate. Its pathway is carbohydrate degradation; pentose phosphate pathway; D-ribose 5-phosphate from D-ribulose 5-phosphate (non-oxidative stage): step 1/1. Functionally, catalyzes the reversible conversion of ribose-5-phosphate to ribulose 5-phosphate. The protein is Ribose-5-phosphate isomerase A of Streptococcus pyogenes serotype M1.